Reading from the N-terminus, the 282-residue chain is MTVGRAESPELVAVLAGRRIAVLTGAGISTDSGIPDYRGPESPPSNPMTIRQFTGDPAFRQRYWARNHVGWRHMDDTLPNAGHRALAALEDAAVVTGVITQNVDLLHTKAGSRNVIDLHGSYARVICLGCGDTTSRAALAERLEALNPGFIERTEAIGGLAVAPDADAVVAETASFRYVDCARCAGMLKPDIVYFGESVPKDVVAAAYRLIDESDTLLVAGSSLTVFSGYRFVRHAAARGIPIAIVNRGDTRGDHLATVKVDGGCSELLALLADELSPLPTH.

In terms of domain architecture, Deacetylase sirtuin-type spans 1–282 (MTVGRAESPE…ADELSPLPTH (282 aa)). Residues 25–45 (GAGI…SPPS) and 101–104 (QNVD) each bind NAD(+). The active-site Proton acceptor is H119. Residues C127, C130, C181, and C184 each contribute to the Zn(2+) site. Residues 221–223 (GSS), 247–249 (NRG), and C265 each bind NAD(+).

This sequence belongs to the sirtuin family. Class II subfamily. Requires Zn(2+) as cofactor.

The protein localises to the cytoplasm. It carries out the reaction N(6)-acetyl-L-lysyl-[protein] + NAD(+) + H2O = 2''-O-acetyl-ADP-D-ribose + nicotinamide + L-lysyl-[protein]. NAD-dependent protein deacetylase which modulates the activities of several enzymes which are inactive in their acetylated form. This is NAD-dependent protein deacetylase 1 from Mycobacterium avium (strain 104).